A 208-amino-acid polypeptide reads, in one-letter code: Uracil phosphoribosyltransferase (208 aa).

5-phospho-alpha-D-ribose 1-diphosphate-binding positions include Arg77, Arg102, and 128-136; that span reads DPMLATGGT. Uracil contacts are provided by residues Ile191 and 196–198; that span reads GDI. Asp197 contributes to the 5-phospho-alpha-D-ribose 1-diphosphate binding site.

It belongs to the UPRTase family. It depends on Mg(2+) as a cofactor.

It carries out the reaction UMP + diphosphate = 5-phospho-alpha-D-ribose 1-diphosphate + uracil. Its pathway is pyrimidine metabolism; UMP biosynthesis via salvage pathway; UMP from uracil: step 1/1. Its activity is regulated as follows. Allosterically activated by GTP. Functionally, catalyzes the conversion of uracil and 5-phospho-alpha-D-ribose 1-diphosphate (PRPP) to UMP and diphosphate. The polypeptide is Uracil phosphoribosyltransferase (Aquifex aeolicus (strain VF5)).